The chain runs to 494 residues: PIGF/3-ketodihydrosphingosine reductase fusion protein (494 aa).

NADPH contacts are provided by Gly-20, Ser-22, and Gly-24. A GXSXG motif is present at residues 20-24 (GGSQG). Leu-25 is a binding site for NADP(+). Arg-45 and Lys-49 together coordinate NADPH. Val-54 provides a ligand contact to NADP(+). NADPH is bound by residues Asp-74 and Leu-75. Residues 148–168 (ILLVGSLLSSLPIIGYSAYSP) traverse the membrane as a helical segment. 3 residues coordinate NADP(+): Tyr-166, Lys-170, and Ile-199. Tyr-166 acts as the Proton acceptor in catalysis. Catalysis depends on Lys-170, which acts as the Lowers pKa of active site Tyr. A run of 6 helical transmembrane segments spans residues 264–284 (HDNP…WPFY), 312–332 (IFTL…LNCL), 370–390 (LAGA…LVAF), 402–422 (YFCA…TLAF), 444–464 (LRSW…PLDW), and 473–493 (ITIV…GEIL).

It in the N-terminal section; belongs to the short-chain dehydrogenases/reductases (SDR) family. This sequence in the C-terminal section; belongs to the PIGF family.

It is found in the endoplasmic reticulum membrane. The catalysed reaction is sphinganine + NADP(+) = 3-oxosphinganine + NADPH + H(+). It functions in the pathway glycolipid biosynthesis; glycosylphosphatidylinositol-anchor biosynthesis. Its pathway is lipid metabolism; sphingolipid metabolism. In terms of biological role, acts in the GPI biosynthetic pathway between GlcNAc-PI synthesis and GPI transfer to protein. Required for the formation of complete GPI precursors CP1 and CP2. Catalyzes the reduction of 3'-oxosphinganine (3-ketodihydrosphingosine/KDS) to sphinganine (dihydrosphingosine/DHS), the second step of de novo sphingolipid biosynthesis. In Schizosaccharomyces pombe (strain 972 / ATCC 24843) (Fission yeast), this protein is PIGF/3-ketodihydrosphingosine reductase fusion protein.